Reading from the N-terminus, the 318-residue chain is NADH-ubiquinone oxidoreductase chain 1 (318 aa).

A run of 8 helical transmembrane segments spans residues 2–22 (FMINLLLMIVPILLAVAFLTL), 68–88 (ISMFIIAPILALALALTMWTP), 100–120 (LGVLFMLAMSSLAVYSILWSG), 146–166 (LAIILLSVLLLNGSFTLPTLI), 171–191 (HMWLIIPSWPLAMMWFISTLA), 222–242 (LFFLAEYANIIMMNIFTTILF), 253–273 (ELYTINFVTKSMLLTISFLWV), and 293–313 (FLPLTLALCMWHVTMPIITAG).

The protein belongs to the complex I subunit 1 family. As to quaternary structure, core subunit of respiratory chain NADH dehydrogenase (Complex I) which is composed of 45 different subunits.

It is found in the mitochondrion inner membrane. The catalysed reaction is a ubiquinone + NADH + 5 H(+)(in) = a ubiquinol + NAD(+) + 4 H(+)(out). Its function is as follows. Core subunit of the mitochondrial membrane respiratory chain NADH dehydrogenase (Complex I) which catalyzes electron transfer from NADH through the respiratory chain, using ubiquinone as an electron acceptor. Essential for the catalytic activity and assembly of complex I. The polypeptide is NADH-ubiquinone oxidoreductase chain 1 (MT-ND1) (Hipposideros diadema (Diadem leaf-nosed bat)).